Consider the following 98-residue polypeptide: MANFVLNAQARAEDKQGKGASRRLRRESLVPAIIYGGNAEPVAVTLELRELVKALESNVFFEEVVEIKVGDKVENVKIQALQRHPAKNTPMHADFKRA.

Residues 1 to 23 (MANFVLNAQARAEDKQGKGASRR) form a disordered region.

It belongs to the bacterial ribosomal protein bL25 family. As to quaternary structure, part of the 50S ribosomal subunit; part of the 5S rRNA/L5/L18/L25 subcomplex. Contacts the 5S rRNA. Binds to the 5S rRNA independently of L5 and L18.

In terms of biological role, this is one of the proteins that binds to the 5S RNA in the ribosome where it forms part of the central protuberance. The sequence is that of Large ribosomal subunit protein bL25 from Acinetobacter baumannii (strain AB307-0294).